The sequence spans 183 residues: Adenine phosphoribosyltransferase (183 aa).

The protein belongs to the purine/pyrimidine phosphoribosyltransferase family. Homodimer.

It localises to the cytoplasm. The catalysed reaction is AMP + diphosphate = 5-phospho-alpha-D-ribose 1-diphosphate + adenine. It functions in the pathway purine metabolism; AMP biosynthesis via salvage pathway; AMP from adenine: step 1/1. Its function is as follows. Catalyzes a salvage reaction resulting in the formation of AMP, that is energically less costly than de novo synthesis. This Salmonella arizonae (strain ATCC BAA-731 / CDC346-86 / RSK2980) protein is Adenine phosphoribosyltransferase.